A 233-amino-acid chain; its full sequence is Biosynthetic peptidoglycan transglycosylase (233 aa).

Residues 8-28 (LIALPVGIFIFFNAYVYGNII) traverse the membrane as a helical segment.

It belongs to the glycosyltransferase 51 family.

The protein resides in the cell inner membrane. The catalysed reaction is [GlcNAc-(1-&gt;4)-Mur2Ac(oyl-L-Ala-gamma-D-Glu-L-Lys-D-Ala-D-Ala)](n)-di-trans,octa-cis-undecaprenyl diphosphate + beta-D-GlcNAc-(1-&gt;4)-Mur2Ac(oyl-L-Ala-gamma-D-Glu-L-Lys-D-Ala-D-Ala)-di-trans,octa-cis-undecaprenyl diphosphate = [GlcNAc-(1-&gt;4)-Mur2Ac(oyl-L-Ala-gamma-D-Glu-L-Lys-D-Ala-D-Ala)](n+1)-di-trans,octa-cis-undecaprenyl diphosphate + di-trans,octa-cis-undecaprenyl diphosphate + H(+). The protein operates within cell wall biogenesis; peptidoglycan biosynthesis. Functionally, peptidoglycan polymerase that catalyzes glycan chain elongation from lipid-linked precursors. This chain is Biosynthetic peptidoglycan transglycosylase, found in Neisseria gonorrhoeae (strain ATCC 700825 / FA 1090).